The primary structure comprises 396 residues: S-adenosylmethionine synthase 2 (396 aa).

Glu13 contacts Mg(2+). Residue His19 participates in ATP binding. Glu47 lines the K(+) pocket. Residues Glu60 and Gln103 each coordinate L-methionine. ATP-binding positions include 171–173, 239–242, Asp250, 256–257, Ala273, Lys277, and Lys281; these read DGK, SGRF, and RK. Residue Asp250 coordinates L-methionine. Lys281 lines the L-methionine pocket.

It belongs to the AdoMet synthase family. As to quaternary structure, homotetramer. Requires Mn(2+) as cofactor. Mg(2+) is required as a cofactor. Co(2+) serves as cofactor. The cofactor is K(+).

The protein resides in the cytoplasm. The enzyme catalyses L-methionine + ATP + H2O = S-adenosyl-L-methionine + phosphate + diphosphate. Its pathway is amino-acid biosynthesis; S-adenosyl-L-methionine biosynthesis; S-adenosyl-L-methionine from L-methionine: step 1/1. In terms of biological role, catalyzes the formation of S-adenosylmethionine from methionine and ATP. The reaction comprises two steps that are both catalyzed by the same enzyme: formation of S-adenosylmethionine (AdoMet) and triphosphate, and subsequent hydrolysis of the triphosphate. This Dianthus caryophyllus (Carnation) protein is S-adenosylmethionine synthase 2 (SAM2).